The following is a 437-amino-acid chain: O-methyltransferase 3 (437 aa).

The segment at 1–21 (MNNKTSNGDITNDEPTVGSKR) is disordered. Residues 146-180 (SDNLYQDKDDLEKQEKEREKKMANLLSKNVDIKEL) adopt a coiled-coil conformation. A disordered region spans residues 408 to 437 (DPINNNNNNNNNNNNNNNNTTTTTSTTTTN). A compositionally biased stretch (low complexity) spans 411 to 437 (NNNNNNNNNNNNNNNNTTTTTSTTTTN).

It belongs to the methyltransferase superfamily. METL family.

Its function is as follows. Probable methyltransferase. The protein is O-methyltransferase 3 (omt3) of Dictyostelium discoideum (Social amoeba).